Reading from the N-terminus, the 306-residue chain is MTEADMLFSVTVPGSTANLGPGFDSVGMALSRYLRLSVFPHDEWRFEAETEVVAGIPEGTDNLIYQVAKRTAAHFGKELPPSLVKVWSDIPLARGLGSSAAAIAAAVELANELADLKLSDREKLHFASLEEGHPDNAGASLFGGLVIGLHEEDETEMVSMKDIDLDVVVVIPFYEVLTKDARDVLPESLSYPKAVEASAVSNMLVAGLMAKDWKLVGRMMQKDLFHQPYRRALVPELSKVEHEAGQNGAFGTALSGAGPTILSFIEKGKGEALRNQLASKFPHCEVDCLYVPDTGIIVERKSVNSV.

91 to 101 (PLARGLGSSAA) is a binding site for ATP.

Belongs to the GHMP kinase family. Homoserine kinase subfamily.

The protein resides in the cytoplasm. It carries out the reaction L-homoserine + ATP = O-phospho-L-homoserine + ADP + H(+). Its pathway is amino-acid biosynthesis; L-threonine biosynthesis; L-threonine from L-aspartate: step 4/5. In terms of biological role, catalyzes the ATP-dependent phosphorylation of L-homoserine to L-homoserine phosphate. In Bacillus licheniformis (strain ATCC 14580 / DSM 13 / JCM 2505 / CCUG 7422 / NBRC 12200 / NCIMB 9375 / NCTC 10341 / NRRL NRS-1264 / Gibson 46), this protein is Homoserine kinase.